A 37-amino-acid chain; its full sequence is Large ribosomal subunit protein bL36 (37 aa).

It belongs to the bacterial ribosomal protein bL36 family.

The sequence is that of Large ribosomal subunit protein bL36 from Symbiobacterium thermophilum (strain DSM 24528 / JCM 14929 / IAM 14863 / T).